Here is a 251-residue protein sequence, read N- to C-terminus: MSVSPVAIVSTPVAVSASPAGSPAQHDAPLTVRWRGTEAYQTSFDAMRAFTDARTAETPDEIWIVEHPPVYTLGQAGDPAHLLVADSGVPLVKVDRGGQITYHGPGQIVAYLLLDLRRRKLMVRTLVTRIEEAVIETLAAYNLASVRKAGAPGIYVASGVHGGAKIAALGLKIRNGCSYHGLSLNVKMDLRPFLAINPCGYAGLETVDMASLEVAADWNDVARTLVGRLIANLDGASAAADKPHALEHSND.

Residues Ala56 to Asp241 enclose the BPL/LPL catalytic domain. Substrate is bound by residues Arg96–His103, Ala168–Gly170, and Gly181–Ser183. Cys199 functions as the Acyl-thioester intermediate in the catalytic mechanism.

It belongs to the LipB family.

The protein resides in the cytoplasm. It carries out the reaction octanoyl-[ACP] + L-lysyl-[protein] = N(6)-octanoyl-L-lysyl-[protein] + holo-[ACP] + H(+). Its pathway is protein modification; protein lipoylation via endogenous pathway; protein N(6)-(lipoyl)lysine from octanoyl-[acyl-carrier-protein]: step 1/2. Catalyzes the transfer of endogenously produced octanoic acid from octanoyl-acyl-carrier-protein onto the lipoyl domains of lipoate-dependent enzymes. Lipoyl-ACP can also act as a substrate although octanoyl-ACP is likely to be the physiological substrate. The sequence is that of Octanoyltransferase from Burkholderia vietnamiensis (strain G4 / LMG 22486) (Burkholderia cepacia (strain R1808)).